Here is a 319-residue protein sequence, read N- to C-terminus: Probable secreted beta-glucosidase C2G2.17c (319 aa).

A signal peptide spans 1 to 19 (MLFNNFLCFAVSAIPLVSA). Asparagine 36, asparagine 39, asparagine 45, asparagine 48, and asparagine 221 each carry an N-linked (GlcNAc...) asparagine glycan.

It belongs to the SUN family.

It localises to the secreted. In terms of biological role, cell surface beta-glucosidase involved in cell wall biogenesis. In Schizosaccharomyces pombe (strain 972 / ATCC 24843) (Fission yeast), this protein is Probable secreted beta-glucosidase C2G2.17c.